A 634-amino-acid polypeptide reads, in one-letter code: Chaperone protein HtpG (634 aa).

The a; substrate-binding stretch occupies residues 1–344 (MSETVSHNKE…SNDLPLNVSR (344 aa)). The segment at 345-561 (EILQDNKVTQ…DFEMGTQMAK (217 aa)) is b. The segment at 562 to 634 (LLEAAGQAVP…GAINKLLTKV (73 aa)) is c.

The protein belongs to the heat shock protein 90 family. As to quaternary structure, homodimer.

It localises to the cytoplasm. In terms of biological role, molecular chaperone. Has ATPase activity. The polypeptide is Chaperone protein HtpG (Vibrio campbellii (strain ATCC BAA-1116)).